A 199-amino-acid chain; its full sequence is N-(5'-phosphoribosyl)anthranilate isomerase (199 aa).

It belongs to the TrpF family.

It carries out the reaction N-(5-phospho-beta-D-ribosyl)anthranilate = 1-(2-carboxyphenylamino)-1-deoxy-D-ribulose 5-phosphate. Its pathway is amino-acid biosynthesis; L-tryptophan biosynthesis; L-tryptophan from chorismate: step 3/5. The sequence is that of N-(5'-phosphoribosyl)anthranilate isomerase from Lacticaseibacillus paracasei (strain ATCC 334 / BCRC 17002 / CCUG 31169 / CIP 107868 / KCTC 3260 / NRRL B-441) (Lactobacillus paracasei).